Here is a 268-residue protein sequence, read N- to C-terminus: Glucosamine-6-phosphate deaminase (268 aa).

Aspartate 67 (proton acceptor; for enolization step) is an active-site residue. The active-site For ring-opening step is asparagine 137. The active-site Proton acceptor; for ring-opening step is the histidine 139. The active-site For ring-opening step is the glutamate 144.

The protein belongs to the glucosamine/galactosamine-6-phosphate isomerase family. NagB subfamily. Homohexamer.

It catalyses the reaction alpha-D-glucosamine 6-phosphate + H2O = beta-D-fructose 6-phosphate + NH4(+). It participates in amino-sugar metabolism; N-acetylneuraminate degradation; D-fructose 6-phosphate from N-acetylneuraminate: step 5/5. In terms of biological role, catalyzes the reversible isomerization-deamination of glucosamine 6-phosphate (GlcN6P) to form fructose 6-phosphate (Fru6P) and ammonium ion. The polypeptide is Glucosamine-6-phosphate deaminase (Colwellia psychrerythraea (strain 34H / ATCC BAA-681) (Vibrio psychroerythus)).